The following is a 437-amino-acid chain: Trigger factor (437 aa).

One can recognise a PPIase FKBP-type domain in the interval 163–248 (SDRVIIDFEG…LNNVSEATLP (86 aa)).

It belongs to the FKBP-type PPIase family. Tig subfamily.

The protein resides in the cytoplasm. It catalyses the reaction [protein]-peptidylproline (omega=180) = [protein]-peptidylproline (omega=0). In terms of biological role, involved in protein export. Acts as a chaperone by maintaining the newly synthesized protein in an open conformation. Functions as a peptidyl-prolyl cis-trans isomerase. This Neisseria meningitidis serogroup C / serotype 2a (strain ATCC 700532 / DSM 15464 / FAM18) protein is Trigger factor.